A 424-amino-acid chain; its full sequence is Probable ribonuclease FAU-1 (424 aa).

It belongs to the FAU-1 family.

Functionally, probable RNase involved in rRNA stability through maturation and/or degradation of precursor rRNAs. Binds to RNA in loop regions with AU-rich sequences. This Saccharolobus islandicus (strain M.16.27) (Sulfolobus islandicus) protein is Probable ribonuclease FAU-1.